We begin with the raw amino-acid sequence, 631 residues long: Beta-galactosidase-1-like protein 3 (631 aa).

Glu-203 acts as the Proton donor in catalysis. The Nucleophile role is filled by Glu-277.

This sequence belongs to the glycosyl hydrolase 35 family.

This chain is Beta-galactosidase-1-like protein 3 (Glb1l3), found in Rattus norvegicus (Rat).